The sequence spans 859 residues: Protein O-mannosyl-transferase Tmtc1 (859 aa).

The Cytoplasmic segment spans residues 1 to 22 (MHTPKCRRPSMSATLSHKDLAG). The helical transmembrane segment at 23–43 (LAGCSALAFVLYLNTLNAGFV) threads the bilayer. The Extracellular portion of the chain corresponds to 44 to 103 (YDDRRAILANGDVTGARPLANLLRNDFWGTPLVDSGSHGSWRPLCVLSFRLNYLAGGMTP). The chain crosses the membrane as a helical span at residues 104–124 (LGYHLVNVMLHCVATWLVFLV). Over 125 to 134 (ARTLLPSRMG) the chain is Cytoplasmic. 2 helical membrane-spanning segments follow: residues 135-154 (VLAA…AVAG) and 155-174 (LVGR…YLSY). The Cytoplasmic portion of the chain corresponds to 175-189 (RRHMLNREWGSLILT). The helical transmembrane segment at 190–210 (IMLALAALLCKETAITALLLC) threads the bilayer. The Extracellular segment spans residues 211 to 245 (GLCDVLSPVGRENSDKVCDGSISGLASFNFQRRFR). A helical transmembrane segment spans residues 246-266 (SLSILGFTLLCGLYCRLSLLP). Over 267-288 (RPSTAFSAADNPTAHESCFWTR) the chain is Cytoplasmic. A helical membrane pass occupies residues 289 to 309 (TLTFLYLPVANFGILLWPQEL). Residues 310 to 328 (SFDWGMEAVSRIRTLWDAR) are Extracellular-facing. A helical transmembrane segment spans residues 329-349 (NILTAGFYGSLVAILWKGSGL). Residues 350–422 (RSAASPMDFA…SWTAAPILGT (73 aa)) lie on the Cytoplasmic side of the membrane. The helical transmembrane segment at 423–443 (AFLVLPFLPASNLLFYVGFVM) threads the bilayer. The Extracellular portion of the chain corresponds to 444–446 (AER). Residues 447 to 467 (VLYLPSVGYCLLFGLGFGHLW) traverse the membrane as a helical segment. Over 468–473 (QRVNSS) the chain is Cytoplasmic. The helical transmembrane segment at 474 to 493 (WRSRLMLLCGLALLLGVHGV) threads the bilayer. The Extracellular segment spans residues 494–859 (RTFRRNLDWR…RMNVHKHENE (366 aa)). TPR repeat units lie at residues 518-551 (PKAL…RPTM), 552-585 (ADAH…RPQL), 586-620 (AVAY…EGSG), 632-665 (YTCY…LPLL), 671-704 (AVLH…QPEQ), 705-739 (GAAY…APLE), 740-773 (PSSH…APQD), 774-807 (YTLQ…QPMA), and 808-841 (AHAH…QPGH). N-linked (GlcNAc...) asparagine glycosylation occurs at Asn-567. N-linked (GlcNAc...) asparagine glycosylation is present at Asn-718.

It belongs to the TMTC family.

The protein localises to the membrane. It localises to the endoplasmic reticulum. The enzyme catalyses a di-trans,poly-cis-dolichyl beta-D-mannosyl phosphate + L-seryl-[protein] = 3-O-(alpha-D-mannosyl)-L-seryl-[protein] + a di-trans,poly-cis-dolichyl phosphate + H(+). It catalyses the reaction a di-trans,poly-cis-dolichyl beta-D-mannosyl phosphate + L-threonyl-[protein] = 3-O-(alpha-D-mannosyl)-L-threonyl-[protein] + a di-trans,poly-cis-dolichyl phosphate + H(+). It functions in the pathway protein modification; protein glycosylation. In terms of biological role, transfers mannosyl residues to the hydroxyl group of serine or threonine residues. The chain is Protein O-mannosyl-transferase Tmtc1 from Drosophila melanogaster (Fruit fly).